Here is a 146-residue protein sequence, read N- to C-terminus: MIIKIHNQTSFCITPFKSLLIKMFLPIKEKKLMHLIFVTNEKIQELNSFYRQKNYPTDVLSFPNDLTFFAGLEDNSLGDVFISFSKAQVQAQTAKHSLEREIAFLAVHGFLHLKGYQHRTEEEFQIMLALQEKILQNVGLNLDKTT.

Zn(2+)-binding residues include histidine 108, histidine 112, and histidine 118.

Belongs to the endoribonuclease YbeY family. The cofactor is Zn(2+).

The protein localises to the cytoplasm. Single strand-specific metallo-endoribonuclease involved in late-stage 70S ribosome quality control and in maturation of the 3' terminus of the 16S rRNA. The protein is Endoribonuclease YbeY of Onion yellows phytoplasma (strain OY-M).